A 491-amino-acid chain; its full sequence is UDP-N-acetylmuramate--L-alanine ligase (491 aa).

126-132 lines the ATP pocket; it reads GTHGKTT.

The protein belongs to the MurCDEF family.

It localises to the cytoplasm. The catalysed reaction is UDP-N-acetyl-alpha-D-muramate + L-alanine + ATP = UDP-N-acetyl-alpha-D-muramoyl-L-alanine + ADP + phosphate + H(+). The protein operates within cell wall biogenesis; peptidoglycan biosynthesis. In terms of biological role, cell wall formation. This is UDP-N-acetylmuramate--L-alanine ligase from Photorhabdus laumondii subsp. laumondii (strain DSM 15139 / CIP 105565 / TT01) (Photorhabdus luminescens subsp. laumondii).